We begin with the raw amino-acid sequence, 514 residues long: 2,3-bisphosphoglycerate-independent phosphoglycerate mutase (514 aa).

Residues Asp-14 and Ser-64 each contribute to the Mn(2+) site. The Phosphoserine intermediate role is filled by Ser-64. Substrate is bound by residues His-125, 155–156, Arg-187, Arg-193, 263–266, and Lys-336; these read RD and RADR. Residues Asp-403, His-407, Asp-444, His-445, and His-463 each coordinate Mn(2+).

Belongs to the BPG-independent phosphoglycerate mutase family. Monomer. Mn(2+) serves as cofactor.

It catalyses the reaction (2R)-2-phosphoglycerate = (2R)-3-phosphoglycerate. It functions in the pathway carbohydrate degradation; glycolysis; pyruvate from D-glyceraldehyde 3-phosphate: step 3/5. In terms of biological role, catalyzes the interconversion of 2-phosphoglycerate and 3-phosphoglycerate. The protein is 2,3-bisphosphoglycerate-independent phosphoglycerate mutase of Enterobacter sp. (strain 638).